The sequence spans 461 residues: Transcriptional activator RocR (461 aa).

A 4-aspartylphosphate modification is found at D57. Positions 143–372 constitute a Sigma-54 factor interaction domain; it reads ILGTSPAIQD…EHMIEGAMNF (230 aa). Residues 171 to 178 and 233 to 242 contribute to the ATP site; these read GETGTGKE and AHGGTLLLDE. Positions 434–453 form a DNA-binding region, H-T-H motif; the sequence is ISKAAQELGISRQSLQYRLK.

In terms of biological role, positive regulator of arginine catabolism. Controls the transcription of the two operons rocABC and rocDEF and probably acts by binding to the corresponding upstream activating sequences. In Bacillus subtilis (strain 168), this protein is Transcriptional activator RocR (rocR).